We begin with the raw amino-acid sequence, 99 residues long: MMINNLEALKLFAHHKGGGSTANGRNSAGRRLGAKRADGQKINAGSIIFRQRGTKIHPGKNVGIGGDDTLFALTSGVVKFERLGRDRKQVSVYPVEEAK.

Residues 1–12 (MMINNLEALKLF) constitute a propeptide that is removed on maturation. Residues 15 to 36 (HKGGGSTANGRNSAGRRLGAKR) are disordered.

The protein belongs to the bacterial ribosomal protein bL27 family. Post-translationally, the N-terminus is cleaved by ribosomal processing cysteine protease Prp.

The chain is Large ribosomal subunit protein bL27 from Lactobacillus johnsonii (strain CNCM I-12250 / La1 / NCC 533).